Consider the following 343-residue polypeptide: Inositol 2-dehydrogenase (343 aa).

It belongs to the Gfo/Idh/MocA family. Homotetramer.

It carries out the reaction myo-inositol + NAD(+) = scyllo-inosose + NADH + H(+). Its function is as follows. Involved in the oxidation of myo-inositol (MI) to 2-keto-myo-inositol (2KMI or 2-inosose). This Streptomyces avermitilis (strain ATCC 31267 / DSM 46492 / JCM 5070 / NBRC 14893 / NCIMB 12804 / NRRL 8165 / MA-4680) protein is Inositol 2-dehydrogenase.